Here is a 914-residue protein sequence, read N- to C-terminus: MDNKTDNKNNLTPQSAPSSAPHKERLTPMMEQYIEIKAVNSDCLLFYRMGDFYELFFNDAIEAAQVLGITLTTRGKHLGEDIPMCGVPVHTADDYLQKLISCGYRVAVCEQTEDPAEAKKRGSKSIVRRDVVRLVTPGTLTEEKLLDPTRANYLMTLARIKTSDGEEFALSWIDISTGIFRVTESRLEKLLADIMRVDPQEIIVADSFFHDKSHKSLFNVLDCIVSPQHASLFDVITAERDICSYFKLSTLEGIADYSRPELSAIAAAIRYIEKTQITHRPPLMRPERQNESATLFIDAATRLSLELVRTTSGQRDGSLLKAIDRTVTGGGSRLLLDRLIAPLTTPSAIDKRLDSIAFFLRNTSLAEDIKLILKGGPDMPRAVSRLALGRGGPRDMASIQRGFEIIRELHQLLSNELLPQEISDVQQIFSHLPTALHLRLEQALADDLPLLKRDGGFIRPHYHKELDEMRTLRDESRRVIAELQAQYAQETDIKTLKIKHNNILGYFIEVTNLQATALTNTPQAKARFIHRQTMANAMRFTTTELAELESRIAHAANHALTLELEIFDTLVHEITEQVDFIRKAAESLAVLDVSVALAHLAEEQGYCRPKIDQSLTFCITAGRHPVVEQALRKQAAEPFVANNCDLSLQENHQYAAIWLLTGPNMGGKSTFLRQNALIAIMAQMGSFVPATSAHIGVVDRLFSRVGASDDLARGRSTFMMEMVETATILNHATQHSLVILDEIGRGTSTFDGLSIAWATVEYLHEVNHCRAILATHFHEMTALTEKLDRLHNVTMKVKNWDGDVIFLHEVTPGAADRSYGVQVAKLAGLPKAVITRATDVLQQLEQGEMAGKGHKLIDDLPLFSLKTTSSLNEDTNKYSMLHEAFKNIHPDELSPKQALEALYHLKQLEKNNPL.

The interval 1 to 24 (MDNKTDNKNNLTPQSAPSSAPHKE) is disordered. Residues 8–18 (KNNLTPQSAPS) are compositionally biased toward polar residues. Residue 662-669 (GPNMGGKS) coordinates ATP.

It belongs to the DNA mismatch repair MutS family.

This protein is involved in the repair of mismatches in DNA. It is possible that it carries out the mismatch recognition step. This protein has a weak ATPase activity. The polypeptide is DNA mismatch repair protein MutS (Bartonella henselae (strain ATCC 49882 / DSM 28221 / CCUG 30454 / Houston 1) (Rochalimaea henselae)).